Here is a 386-residue protein sequence, read N- to C-terminus: DNA-directed RNA polymerase subunit Rpo1C (386 aa).

The protein belongs to the RNA polymerase beta' chain family. Part of the RNA polymerase complex.

It localises to the cytoplasm. It carries out the reaction RNA(n) + a ribonucleoside 5'-triphosphate = RNA(n+1) + diphosphate. In terms of biological role, DNA-dependent RNA polymerase (RNAP) catalyzes the transcription of DNA into RNA using the four ribonucleoside triphosphates as substrates. Forms part of the jaw domain. In Methanococcus maripaludis (strain DSM 14266 / JCM 13030 / NBRC 101832 / S2 / LL), this protein is DNA-directed RNA polymerase subunit Rpo1C.